A 532-amino-acid polypeptide reads, in one-letter code: Aspartate--tRNA ligase 1, cytoplasmic (532 aa).

Positions 7–41 (LEECGEKISKKESKKRAAKLEKLLRKQEREEATSS) form a coiled coil. Positions 31-58 (RKQEREEATSSSLSLEEEDESCSSNYGD) are disordered. The OB DNA-binding region spans 88 to 169 (VSIRGRLHKN…QVEIHVRKMY (82 aa)). Glu260 provides a ligand contact to L-aspartate. Residues 282–285 (QLHK) form an aspartate region. Arg304 serves as a coordination point for L-aspartate. ATP contacts are provided by residues 304-306 (RAE), 312-314 (RHL), and Glu455. Mg(2+) is bound by residues Glu455 and Ser458. L-aspartate-binding residues include Ser458 and Arg462. 503 to 506 (GLER) is an ATP binding site.

This sequence belongs to the class-II aminoacyl-tRNA synthetase family. Type 2 subfamily.

It is found in the cytoplasm. Its subcellular location is the cytosol. It catalyses the reaction tRNA(Asp) + L-aspartate + ATP = L-aspartyl-tRNA(Asp) + AMP + diphosphate. Its function is as follows. Catalyzes the specific attachment of an amino acid to its cognate tRNA in a 2 step reaction: the amino acid (AA) is first activated by ATP to form AA-AMP and then transferred to the acceptor end of the tRNA. This is Aspartate--tRNA ligase 1, cytoplasmic from Arabidopsis thaliana (Mouse-ear cress).